A 310-amino-acid polypeptide reads, in one-letter code: MRHLLSTEGLDAATATAVLDTAGTLKQTLLGREVRKLPTLRGRTVVTMFYENSTRTRVSFEVAGKWMSADVINVSAGASSVGKGESLRDTALTLSAAGADCVIVRHPASGAAHRLAGWLEATGTQVVNAGDGMHEHPTQALLDAATLRERLGELAGRRVAIVGDLLHSRVARSNVHLLRTLGAQVVLVAPPTLVPAGVEHWGAEVRHELDPELPGLDAVMLLRVQAERMHGGFFPSAREYSIAYGMNEARLARLPEHAVVLHPGPMLRGMEIAPAVADSPRAAITEQVRNGVHVRMAVLYHLLAGEEIAA.

Carbamoyl phosphate-binding residues include Arg55 and Thr56. Lys83 lines the L-aspartate pocket. Residues Arg105, His136, and Gln139 each contribute to the carbamoyl phosphate site. L-aspartate is bound by residues Arg169 and Arg223. Carbamoyl phosphate is bound by residues Gly264 and Pro265.

The protein belongs to the aspartate/ornithine carbamoyltransferase superfamily. ATCase family. In terms of assembly, heterododecamer (2C3:3R2) of six catalytic PyrB chains organized as two trimers (C3), and six regulatory PyrI chains organized as three dimers (R2).

The catalysed reaction is carbamoyl phosphate + L-aspartate = N-carbamoyl-L-aspartate + phosphate + H(+). The protein operates within pyrimidine metabolism; UMP biosynthesis via de novo pathway; (S)-dihydroorotate from bicarbonate: step 2/3. Its function is as follows. Catalyzes the condensation of carbamoyl phosphate and aspartate to form carbamoyl aspartate and inorganic phosphate, the committed step in the de novo pyrimidine nucleotide biosynthesis pathway. This chain is Aspartate carbamoyltransferase catalytic subunit, found in Saccharopolyspora erythraea (strain ATCC 11635 / DSM 40517 / JCM 4748 / NBRC 13426 / NCIMB 8594 / NRRL 2338).